The sequence spans 74 residues: ATP synthase subunit 9, mitochondrial (74 aa).

2 helical membrane passes run 16–36 (GLIG…IGVS) and 50–70 (ILGF…AFLL).

This sequence belongs to the ATPase C chain family. F-type ATPases have 2 components, CF(1) - the catalytic core - and CF(0) - the membrane proton channel. CF(1) has five subunits: alpha(3), beta(3), gamma(1), delta(1), epsilon(1). CF(0) has three main subunits: a, b and c.

The protein localises to the mitochondrion inner membrane. Its function is as follows. Mitochondrial membrane ATP synthase (F(1)F(0) ATP synthase or Complex V) produces ATP from ADP in the presence of a proton gradient across the membrane which is generated by electron transport complexes of the respiratory chain. F-type ATPases consist of two structural domains, F(1) - containing the extramembraneous catalytic core and F(0) - containing the membrane proton channel, linked together by a central stalk and a peripheral stalk. During catalysis, ATP synthesis in the catalytic domain of F(1) is coupled via a rotary mechanism of the central stalk subunits to proton translocation. Part of the complex F(0) domain. A homomeric c-ring of probably 10 subunits is part of the complex rotary element. This is ATP synthase subunit 9, mitochondrial (atp-9) from Neurospora crassa (strain ATCC 24698 / 74-OR23-1A / CBS 708.71 / DSM 1257 / FGSC 987).